Reading from the N-terminus, the 217-residue chain is Large ribosomal subunit protein uL3 (217 aa).

The segment at 131–155 is disordered; that stretch reads FSSSRASHGNSRSHNVPGSIGMAQD. The span at 132-145 shows a compositional bias: low complexity; that stretch reads SSSRASHGNSRSHN. N5-methylglutamine is present on Gln154.

The protein belongs to the universal ribosomal protein uL3 family. In terms of assembly, part of the 50S ribosomal subunit. Forms a cluster with proteins L14 and L19. In terms of processing, methylated by PrmB.

Its function is as follows. One of the primary rRNA binding proteins, it binds directly near the 3'-end of the 23S rRNA, where it nucleates assembly of the 50S subunit. The chain is Large ribosomal subunit protein uL3 from Nitrosomonas eutropha (strain DSM 101675 / C91 / Nm57).